Here is a 1335-residue protein sequence, read N- to C-terminus: Regulatory-associated protein of mTOR (1335 aa).

Residues Ser-44 and Ser-122 each carry the phosphoserine modification. Ser-696 bears the Phosphoserine; by MAPK8 mark. O-linked (GlcNAc) threonine glycosylation is present at Thr-700. Phosphothreonine; by MAPK8 is present on Thr-706. A phosphoserine; by RPS6KA1 mark is found at Ser-719 and Ser-721. Residue Ser-722 is modified to Phosphoserine; by AMPK and RPS6KA1. Ser-738 is subject to Phosphoserine. Position 791 is a phosphoserine; by PKA (Ser-791). Ser-792 carries the phosphoserine; by AMPK modification. Phosphoserine occurs at positions 836 and 855. The segment at 850–943 is disordered; sequence VLDTSSLTQS…PEQTADDADD (94 aa). Residues 851 to 866 are compositionally biased toward polar residues; it reads LDTSSLTQSAPASPTN. Phosphoserine; by MTOR is present on Ser-859. Ser-863 carries the post-translational modification Phosphoserine; by MAPK8, MTOR and NLK. Position 865 is a phosphothreonine (Thr-865). Low complexity predominate over residues 874-887; it reads AGGSPPASSTSSSS. At Ser-877 the chain carries Phosphoserine; by TBK1. Glycyl lysine isopeptide (Lys-Gly) (interchain with G-Cter in ubiquitin) cross-links involve residues Lys-932 and Lys-948. Position 982 is a phosphoserine (Ser-982). WD repeat units lie at residues 1020–1061, 1065–1106, 1121–1160, 1164–1203, 1209–1249, 1251–1291, and 1299–1335; these read NRNP…DYFH, PRYT…EKNP, TTRG…KVQD, GADS…SECR, EHTA…SVNV, QIVK…NNIK, and QRVG…KRVR. Lys-1097 carries the post-translational modification N6-acetyllysine.

The protein belongs to the WD repeat RAPTOR family. In terms of assembly, part of the mechanistic target of rapamycin complex 1 (mTORC1) which contains MTOR, MLST8 and RPTOR. mTORC1 associates with AKT1S1/PRAS40, which inhibits its activity. mTORC1 associates with DEPTOR, which regulates its activity. mTORC1 binds to and is inhibited by FKBP12-rapamycin. Forms a complex with MTOR under both leucine-rich and -poor conditions. Interacts with (via TOS motifs) EIF4EBP1 and RPS6KB1; interaction is independent of its association with MTOR. Binds preferentially to poorly or non-phosphorylated forms of EIF4EBP1, and this binding is critical to the ability of MTOR to catalyze phosphorylation. Interacts with ULK1 in a nutrient-dependent manner; the interaction is reduced during starvation. Interacts with GTP-bound form of RagA/RRAGA or RagB/RRAGB and GDP-bound form of RagC/RRAGC or RagD/RRAGD, promoting recruitment of mTORC1 to the lysosomes. Interacts (when phosphorylated by AMPK) with 14-3-3 protein, leading to inhibition of its activity. Interacts with SPAG5; SPAG5 competes with MTOR for RPTOR-binding, resulting in decreased mTORC1 formation. Interacts with WAC; WAC positively regulates MTOR activity by promoting the assembly of the TTT complex composed of TELO2, TTI1 and TTI2 and the RUVBL complex composed of RUVBL1 and RUVBL2 into the TTT-RUVBL complex which leads to the dimerization of the mTORC1 complex and its subsequent activation. Interacts with G3BP1. The complex formed with G3BP1 and SPAG5 is increased by oxidative stress. Interacts with HTR6. Interacts with PIH1D1. Interacts with LARP1. Interacts with BRAT1. Interacts with SIK3. Interacts with SLC38A7; this interaction mediates the recruitment of mTORC1 to the lysosome and its subsequent activation. As to quaternary structure, (Microbial infection) Interacts with vaccinia virus protein F17; this interaction dysregulates mTOR. Insulin-stimulated phosphorylation at Ser-863 by MTOR and MAPK8 regulates mTORC1 activity. Phosphorylated at Ser-863 by NLK in response to stress, disrupting the interaction with small GTPases Rag (RagA/RRAGA, RagB/RRAGB, RagC/RRAGC and/or RagD/RRAGD), thereby preventing lysosome recruitment and activation of the mTORC1 complex. Osmotic stress also induces phosphorylation at Ser-696, Thr-706 and Ser-863 by MAPK8. Ser-863 phosphorylation is required for phosphorylation at Ser-855 and Ser-859. In response to nutrient limitation, phosphorylated at Ser-722 and Ser-792 by AMPK; phosphorylation promotes interaction with 14-3-3 proteins, leading to negative regulation of the mTORC1 complex. Phosphorylation at Ser-722 and Ser-792 by AMPK in response to glucose starvation inhibits O-GlcNAcylation by OGT and subsequent activation of mTORC1. In response to growth factors, phosphorylated at Ser-719, Ser-721 and Ser-722 by RPS6KA1, which stimulates mTORC1 activity. Phosphorylation at Ser-791 by PKA downstream of cAMP inhibits the mTORC1 complex. Phosphorylated at Ser-877 by TBK1, leading to negative regulation of the mTORC1 complex. In terms of processing, O-GlcNAcylated by OGT upon glucose sufficiency, promoting interaction with small GTPases Rag (RagA/RRAGA, RagB/RRAGB, RagC/RRAGC and/or RagD/RRAGD) and subsequent recruitment of mTORC1 to lysosomal membranes, leading to activation of the mTORC1 complex. Phosphorylation at Ser-722 and Ser-792 by AMPK in response to glucose starvation inhibits O-GlcNAcylation. Post-translationally, acetylation at Lys-1097 by EP300/p300 in response to leucine metabolite acetyl-coA promotes its activity, leading to activation of the mTORC1 complex. Acetylation is decreased in response to fasting. Ubiquitinated, leading to its degradation by the proteasome. Deubiquitinated by OTUB1 via a non-catalytic mechanism. Ubiquitinated by an E3 ubiquitin ligase complex containing VHL. As to expression, highly expressed in skeletal muscle, and in a lesser extent in brain, lung, small intestine, kidney and placenta. Widely expressed, with highest levels in nasal mucosa and pituitary and lowest in spleen.

It localises to the lysosome membrane. It is found in the cytoplasm. The protein localises to the cytoplasmic granule. Functionally, component of the mechanistic target of rapamycin complex 1 (mTORC1), an evolutionarily conserved central nutrient sensor that stimulates anabolic reactions and macromolecule biosynthesis to promote cellular biomass generation and growth. In response to nutrients, growth factors or amino acids, mTORC1 is recruited to the lysosome membrane and promotes protein, lipid and nucleotide synthesis by phosphorylating several substrates, such as ribosomal protein S6 kinase (RPS6KB1 and RPS6KB2) and EIF4EBP1 (4E-BP1). In the same time, it inhibits catabolic pathways by phosphorylating the autophagy initiation components ULK1 and ATG13, as well as transcription factor TFEB, a master regulators of lysosomal biogenesis and autophagy. The mTORC1 complex is inhibited in response to starvation and amino acid depletion. Within the mTORC1 complex, RPTOR acts both as a molecular adapter, which (1) mediates recruitment of mTORC1 to lysosomal membranes via interaction with small GTPases Rag (RagA/RRAGA, RagB/RRAGB, RagC/RRAGC and/or RagD/RRAGD), and a (2) substrate-specific adapter, which promotes substrate specificity by binding to TOS motif-containing proteins and direct them towards the active site of the MTOR kinase domain for phosphorylation. mTORC1 complex regulates many cellular processes, such as odontoblast and osteoclast differentiation or neuronal transmission. mTORC1 complex in excitatory neuronal transmission is required for the prosocial behavior induced by the psychoactive substance lysergic acid diethylamide (LSD). The sequence is that of Regulatory-associated protein of mTOR from Homo sapiens (Human).